Consider the following 316-residue polypeptide: Acetyl-coenzyme A carboxylase carboxyl transferase subunit alpha (316 aa).

The CoA carboxyltransferase C-terminal domain occupies 36-290 (KLEQKLDSLK…KQFLVEQLHI (255 aa)).

Belongs to the AccA family. Acetyl-CoA carboxylase is a heterohexamer composed of biotin carboxyl carrier protein (AccB), biotin carboxylase (AccC) and two subunits each of ACCase subunit alpha (AccA) and ACCase subunit beta (AccD).

It is found in the cytoplasm. It carries out the reaction N(6)-carboxybiotinyl-L-lysyl-[protein] + acetyl-CoA = N(6)-biotinyl-L-lysyl-[protein] + malonyl-CoA. It functions in the pathway lipid metabolism; malonyl-CoA biosynthesis; malonyl-CoA from acetyl-CoA: step 1/1. Its function is as follows. Component of the acetyl coenzyme A carboxylase (ACC) complex. First, biotin carboxylase catalyzes the carboxylation of biotin on its carrier protein (BCCP) and then the CO(2) group is transferred by the carboxyltransferase to acetyl-CoA to form malonyl-CoA. This chain is Acetyl-coenzyme A carboxylase carboxyl transferase subunit alpha, found in Protochlamydia amoebophila (strain UWE25).